We begin with the raw amino-acid sequence, 206 residues long: Orotate phosphoribosyltransferase (206 aa).

5-phospho-alpha-D-ribose 1-diphosphate is bound by residues Arg114, Lys115, Lys118, His120, and 141 to 149 (EDVVTTGQS). Orotate-binding residues include Thr145 and Arg173.

The protein belongs to the purine/pyrimidine phosphoribosyltransferase family. PyrE subfamily. In terms of assembly, homodimer. Mg(2+) serves as cofactor.

It carries out the reaction orotidine 5'-phosphate + diphosphate = orotate + 5-phospho-alpha-D-ribose 1-diphosphate. The protein operates within pyrimidine metabolism; UMP biosynthesis via de novo pathway; UMP from orotate: step 1/2. In terms of biological role, catalyzes the transfer of a ribosyl phosphate group from 5-phosphoribose 1-diphosphate to orotate, leading to the formation of orotidine monophosphate (OMP). The polypeptide is Orotate phosphoribosyltransferase (Nostoc sp. (strain PCC 7120 / SAG 25.82 / UTEX 2576)).